A 243-amino-acid polypeptide reads, in one-letter code: 7-cyano-7-deazaguanine synthase (243 aa).

An ATP-binding site is contributed by 14–24 (FSGGQDSATCL). Positions 202, 217, 220, and 223 each coordinate Zn(2+).

This sequence belongs to the QueC family. Zn(2+) serves as cofactor.

It carries out the reaction 7-carboxy-7-deazaguanine + NH4(+) + ATP = 7-cyano-7-deazaguanine + ADP + phosphate + H2O + H(+). It participates in purine metabolism; 7-cyano-7-deazaguanine biosynthesis. Catalyzes the ATP-dependent conversion of 7-carboxy-7-deazaguanine (CDG) to 7-cyano-7-deazaguanine (preQ(0)). The polypeptide is 7-cyano-7-deazaguanine synthase (Paraburkholderia phymatum (strain DSM 17167 / CIP 108236 / LMG 21445 / STM815) (Burkholderia phymatum)).